The sequence spans 396 residues: 1-deoxy-D-xylulose 5-phosphate reductoisomerase (396 aa).

NADPH contacts are provided by Thr15, Gly16, Ser17, Ile18, Gly41, and Asn129. Lys130 is a binding site for 1-deoxy-D-xylulose 5-phosphate. NADPH is bound at residue Glu131. Asp155 contributes to the Mn(2+) binding site. 1-deoxy-D-xylulose 5-phosphate is bound by residues Ser156, Glu157, Ser182, and His205. Glu157 contributes to the Mn(2+) binding site. Gly211 is a binding site for NADPH. 1-deoxy-D-xylulose 5-phosphate-binding residues include Ser218, Asn223, Lys224, and Glu227. A Mn(2+)-binding site is contributed by Glu227.

It belongs to the DXR family. Mg(2+) serves as cofactor. The cofactor is Mn(2+).

It catalyses the reaction 2-C-methyl-D-erythritol 4-phosphate + NADP(+) = 1-deoxy-D-xylulose 5-phosphate + NADPH + H(+). It functions in the pathway isoprenoid biosynthesis; isopentenyl diphosphate biosynthesis via DXP pathway; isopentenyl diphosphate from 1-deoxy-D-xylulose 5-phosphate: step 1/6. Catalyzes the NADPH-dependent rearrangement and reduction of 1-deoxy-D-xylulose-5-phosphate (DXP) to 2-C-methyl-D-erythritol 4-phosphate (MEP). This Xanthomonas campestris pv. campestris (strain B100) protein is 1-deoxy-D-xylulose 5-phosphate reductoisomerase.